A 658-amino-acid polypeptide reads, in one-letter code: DNA mismatch repair protein MutL (658 aa).

Disordered stretches follow at residues 114-137 (RQNDSSHATQVKAEDGKLSSPTAA) and 437-456 (RFGNMPSETPAPQTDTPLSD). Polar residues predominate over residues 442-456 (PSETPAPQTDTPLSD).

Belongs to the DNA mismatch repair MutL/HexB family.

In terms of biological role, this protein is involved in the repair of mismatches in DNA. It is required for dam-dependent methyl-directed DNA mismatch repair. May act as a 'molecular matchmaker', a protein that promotes the formation of a stable complex between two or more DNA-binding proteins in an ATP-dependent manner without itself being part of a final effector complex. This Neisseria meningitidis serogroup B (strain ATCC BAA-335 / MC58) protein is DNA mismatch repair protein MutL.